A 294-amino-acid polypeptide reads, in one-letter code: Coiled-coil domain-containing protein 69 (294 aa).

The interval 1 to 43 is disordered; that stretch reads MGCGHSRLSCCKPPKKRRQRPDQPPKPEPQELGPLNGDTATTD. Gly-2 carries the N-myristoyl glycine lipid modification. The segment covering 20 to 29 has biased composition (basic and acidic residues); that stretch reads RPDQPPKPEP. Positions 47–270 form a coiled coil; it reads ASEEAEQHQK…QEKEELLYRV (224 aa). Ser-152 and Ser-239 each carry phosphoserine.

Belongs to the CCDC69 family.

Its subcellular location is the cytoplasm. It localises to the cytoskeleton. The protein resides in the spindle. It is found in the midbody. In terms of biological role, may act as a scaffold to regulate the recruitment and assembly of spindle midzone components. Required for the localization of AURKB and PLK1 to the spindle midzone. The chain is Coiled-coil domain-containing protein 69 (CCDC69) from Bos taurus (Bovine).